A 317-amino-acid chain; its full sequence is Metaxin-1 (317 aa).

Glycyl lysine isopeptide (Lys-Gly) (interchain with G-Cter in ubiquitin) cross-links involve residues Lys-38, Lys-41, and Lys-78. The helical transmembrane segment at 164–184 threads the bilayer; that stretch reads EELEKELYREARECLTLLSQR.

The protein belongs to the metaxin family. In terms of assembly, interacts with MTX2/metaxin-2. Associates with the mitochondrial contact site and cristae organizing system (MICOS) complex, composed of at least MICOS10/MIC10, CHCHD3/MIC19, CHCHD6/MIC25, APOOL/MIC27, IMMT/MIC60, APOO/MIC23/MIC26 and QIL1/MIC13. This complex was also known under the names MINOS or MitOS complex. The MICOS complex associates with mitochondrial outer membrane proteins SAMM50, MTX1 and MTX2 (together described as components of the mitochondrial outer membrane sorting assembly machinery (SAM) complex) and DNAJC11, mitochondrial inner membrane protein TMEM11 and with HSPA9. The MICOS and SAM complexes together with DNAJC11 are part of a large protein complex spanning both membranes termed the mitochondrial intermembrane space bridging (MIB) complex. Interacts with ARMC1. In terms of processing, ubiquitinated by PRKN during mitophagy, leading to its degradation and enhancement of mitophagy. Deubiquitinated by USP30.

It localises to the mitochondrion outer membrane. In terms of biological role, involved in transport of proteins into the mitochondrion. Essential for embryonic development. This is Metaxin-1 (MTX1) from Macaca fascicularis (Crab-eating macaque).